The sequence spans 198 residues: Segregation and condensation protein B (198 aa).

Positions 169 to 198 (LADPAAEEPDQNEMDLFFDRFNQSKEQEEE) are disordered.

It belongs to the ScpB family. Homodimer. Homodimerization may be required to stabilize the binding of ScpA to the Smc head domains. Component of a cohesin-like complex composed of ScpA, ScpB and the Smc homodimer, in which ScpA and ScpB bind to the head domain of Smc. The presence of the three proteins is required for the association of the complex with DNA.

It is found in the cytoplasm. Functionally, participates in chromosomal partition during cell division. May act via the formation of a condensin-like complex containing Smc and ScpA that pull DNA away from mid-cell into both cell halves. In Listeria monocytogenes serotype 4a (strain HCC23), this protein is Segregation and condensation protein B.